We begin with the raw amino-acid sequence, 231 residues long: 26S proteasome non-ATPase regulatory subunit 10 (231 aa).

ANK repeat units lie at residues 3 to 36 (GCVS…ATRT), 37 to 69 (DQDS…VNDK), 70 to 102 (DDAG…VNAV), 103 to 135 (NQNG…PDAK), 136 to 168 (DHYD…TNIQ), 169 to 201 (DTEG…IYIE), and 202 to 226 (NKEE…LAES).

As to quaternary structure, part of transient complex containing PSMD10, PSMC4, PSMC5 and PAAF1 formed during the assembly of the 26S proteasome. Stays associated throughout the assembly of the PA700/19S RC and is released upon association with the 20S core. Interacts with PSMC4. Interacts with RB1. Interacts with CDK4. Interacts with MDM2. Interacts with RELA. Associates with a CDK4:CCND2 serine/threonine kinase complex. Interacts with ARHGDIA and increases the interaction between ARHGDIA and RHOA, hence promotes ARHGDIA inactivation of RHOA and ROCK.

The protein resides in the cytoplasm. It localises to the nucleus. Its function is as follows. Acts as a chaperone during the assembly of the 26S proteasome, specifically of the PA700/19S regulatory complex (RC). In the initial step of the base subcomplex assembly is part of an intermediate PSMD10:PSMC4:PSMC5:PAAF1 module which probably assembles with a PSMD5:PSMC2:PSMC1:PSMD2 module. Independently of the proteasome, regulates EGF-induced AKT activation through inhibition of the RHOA/ROCK/PTEN pathway, leading to prolonged AKT activation. Plays an important role in RAS-induced tumorigenesis. In terms of biological role, acts as an oncoprotein by being involved in negative regulation of tumor suppressors RB1 and p53/TP53. Overexpression is leading to phosphorylation of RB1 and proteasomal degradation of RB1. Regulates CDK4-mediated phosphorylation of RB1 by competing with CDKN2A for binding with CDK4. Facilitates binding of MDM2 to p53/TP53 and the mono- and polyubiquitination of p53/TP53 by MDM2 suggesting a function in targeting the TP53:MDM2 complex to the 26S proteasome. Involved in p53-independent apoptosis. Involved in regulation of NF-kappa-B by retaining it in the cytoplasm. Binds to the NF-kappa-B component RELA and accelerates its XPO1/CRM1-mediated nuclear export. In Mus musculus (Mouse), this protein is 26S proteasome non-ATPase regulatory subunit 10 (Psmd10).